The sequence spans 399 residues: Acetate kinase (399 aa).

Asn8 lines the Mg(2+) pocket. Lys15 provides a ligand contact to ATP. A substrate-binding site is contributed by Arg89. Asp147 functions as the Proton donor/acceptor in the catalytic mechanism. Residues His207–Gly211, Asp284–Arg286, and Gly332–Asn336 contribute to the ATP site. Mg(2+) is bound at residue Glu385.

This sequence belongs to the acetokinase family. In terms of assembly, homodimer. The cofactor is Mg(2+). Mn(2+) serves as cofactor.

It is found in the cytoplasm. It carries out the reaction acetate + ATP = acetyl phosphate + ADP. The protein operates within metabolic intermediate biosynthesis; acetyl-CoA biosynthesis; acetyl-CoA from acetate: step 1/2. Functionally, catalyzes the formation of acetyl phosphate from acetate and ATP. Can also catalyze the reverse reaction. This chain is Acetate kinase, found in Streptococcus mutans serotype c (strain ATCC 700610 / UA159).